An 875-amino-acid chain; its full sequence is Leucine--tRNA ligase (875 aa).

Positions 57–67 match the 'HIGH' region motif; that stretch reads PYPSGQIHMGH. The 'KMSKS' region motif lies at 631-635; it reads KMSKS. Lys634 provides a ligand contact to ATP.

Belongs to the class-I aminoacyl-tRNA synthetase family.

It localises to the cytoplasm. It carries out the reaction tRNA(Leu) + L-leucine + ATP = L-leucyl-tRNA(Leu) + AMP + diphosphate. The polypeptide is Leucine--tRNA ligase (Granulibacter bethesdensis (strain ATCC BAA-1260 / CGDNIH1)).